We begin with the raw amino-acid sequence, 185 residues long: MAKRKNKELLEIAQEIGGEEAVEVVKALEKMKEATDEELAEATGIRVNTVRRILYMLNDEGLADFKRIRDPETGWYYYYWRLETKKLPEIIRSRKMAELKKLKEMLEEETSEIYYWCGTEGHPKLTFDEAMEYEFQCPICGKMLMQYDNTHIIEELKRRIEELEIELGLKKKPRKTSKKKKSRSE.

One can recognise an HTH TFE/IIEalpha-type domain in the interval 5–88; it reads KNKELLEIAQ…YWRLETKKLP (84 aa).

The protein belongs to the TFE family. In terms of assembly, monomer. Interaction with RNA polymerase subunits RpoF and RpoE is necessary for Tfe stimulatory transcription activity. Able to interact with Tbp and RNA polymerase in the absence of DNA promoter. Interacts both with the preinitiation and elongation complexes.

Its function is as follows. Transcription factor that plays a role in the activation of archaeal genes transcribed by RNA polymerase. Facilitates transcription initiation by enhancing TATA-box recognition by TATA-box-binding protein (Tbp), and transcription factor B (Tfb) and RNA polymerase recruitment. Not absolutely required for transcription in vitro, but particularly important in cases where Tbp or Tfb function is not optimal. It dynamically alters the nucleic acid-binding properties of RNA polymerases by stabilizing the initiation complex and destabilizing elongation complexes. Seems to translocate with the RNA polymerase following initiation and acts by binding to the non template strand of the transcription bubble in elongation complexes. The chain is Transcription factor E from Thermococcus kodakarensis (strain ATCC BAA-918 / JCM 12380 / KOD1) (Pyrococcus kodakaraensis (strain KOD1)).